A 111-amino-acid chain; its full sequence is Ig kappa chain V-III region PC 7175 (111 aa).

The tract at residues 1–23 (DIVLTQSPASLAVSLGQRATISC) is framework-1. Cysteine 23 and cysteine 92 are joined by a disulfide. Positions 24 to 38 (RASKSVSTSGYSYMH) are complementarity-determining-1. A framework-2 region spans residues 39 to 53 (WYQQKPGQPPKLLIY). Residues 54-60 (LASNLES) are complementarity-determining-2. The interval 61 to 92 (GVPARFSGSGSGTDFTLNIHPVEEEDAATYYC) is framework-3. A complementarity-determining-3 region spans residues 93–101 (QHSRELPLT). The framework-4 stretch occupies residues 102–111 (FGAGTKLELK).

The sequence is that of Ig kappa chain V-III region PC 7175 from Mus musculus (Mouse).